The primary structure comprises 100 residues: NADH-quinone oxidoreductase subunit K (100 aa).

A run of 3 helical transmembrane segments spans residues 4–24 (VTWY…GVLL), 29–49 (LIVM…FLAF), and 61–81 (IAFF…AVVI).

It belongs to the complex I subunit 4L family. NDH-1 is composed of 14 different subunits. Subunits NuoA, H, J, K, L, M, N constitute the membrane sector of the complex.

The protein resides in the cell inner membrane. It catalyses the reaction a quinone + NADH + 5 H(+)(in) = a quinol + NAD(+) + 4 H(+)(out). Its function is as follows. NDH-1 shuttles electrons from NADH, via FMN and iron-sulfur (Fe-S) centers, to quinones in the respiratory chain. The immediate electron acceptor for the enzyme in this species is believed to be ubiquinone. Couples the redox reaction to proton translocation (for every two electrons transferred, four hydrogen ions are translocated across the cytoplasmic membrane), and thus conserves the redox energy in a proton gradient. The sequence is that of NADH-quinone oxidoreductase subunit K from Anaeromyxobacter sp. (strain Fw109-5).